A 531-amino-acid chain; its full sequence is Developmental and secondary metabolism regulator VE1 (531 aa).

The Velvet domain maps to 26 to 220; sequence NRSLWYQMTV…ADQGCPVRIR (195 aa). The short motif at 40–45 is the Nuclear localization signal element; that stretch reads ERARAC. Disordered stretches follow at residues 206–435 and 447–517; these read LSKT…SQTS and PVSP…SRAD. Basic and acidic residues predominate over residues 244-253; that stretch reads FERREEDFGR. Pro residues predominate over residues 295 to 306; the sequence is YPPPPPPPPSYE. Residues 348–357 are compositionally biased toward polar residues; that stretch reads YAPTSQSPYS. The span at 381–390 shows a compositional bias: basic and acidic residues; the sequence is LKHELYDRRQ. A compositionally biased stretch (low complexity) spans 391 to 405; sequence STSTYVPPSPSVYST. The span at 416-427 shows a compositional bias: pro residues; that stretch reads SYPPTPVAAPRP. The interval 430–461 is PEST; that stretch reads MHSQTSLPALKIDQLVSPVSPLPPIEPQTGPA. Residues 479-491 are compositionally biased toward polar residues; that stretch reads FAQSTRPLHNGQR.

The protein belongs to the velvet family. VeA subfamily. Component of the heterotrimeric velvet complex composed of LAE1, VE1 and VELB; VE1 acting as a bridging protein between LAE1 and VELB. Interacts with VELB and VELC.

Its subcellular location is the nucleus. It is found in the cytoplasm. Its function is as follows. Component of the velvet transcription factor complex that controls sexual/asexual developmental ratio in response to light, promoting sexual development in the darkness while stimulating asexual sporulation under illumination. The velvet complex hat acts as a global regulator for secondary metabolite gene expression. Controls the expression of the cycotoxins fumonisins and fusarins gene cluster. Involved in cell wall integrity, cell surface hydrophobicity, hyphal polarity and conidiation pattern. Required for pathogenicity against maize seedlings. Involved in oxidative stress resistance by positively regulating the transcription of the catalase-encoding gene CAT2. This Gibberella moniliformis (strain M3125 / FGSC 7600) (Maize ear and stalk rot fungus) protein is Developmental and secondary metabolism regulator VE1.